Consider the following 88-residue polypeptide: UPF0250 protein swp_3927 (88 aa).

It belongs to the UPF0250 family.

In Shewanella piezotolerans (strain WP3 / JCM 13877), this protein is UPF0250 protein swp_3927.